The chain runs to 261 residues: Methyl jasmonate esterase 1 (261 aa).

One can recognise an AB hydrolase-1 domain in the interval 8-251 (FVLVHGACHG…MFSKPLDLCA (244 aa)). The Acyl-ester intermediate role is filled by S82. Active-site charge relay system residues include D211 and H239.

It belongs to the AB hydrolase superfamily. Methylesterase family. As to quaternary structure, homodimer.

The catalysed reaction is methyl (-)-jasmonate + H2O = jasmonate + methanol + H(+). It catalyses the reaction methyl salicylate + H2O = salicylate + methanol + H(+). The protein operates within plant hormone biosynthesis. It functions in the pathway lipid metabolism; oxylipin biosynthesis. Methylesterase that catalyzes the hydrolysis of methyl jasmonate (MeJA) into jasmonate (JA). Can also use methyl salicylate (MeSA) as substrate with a lower efficiency. The chain is Methyl jasmonate esterase 1 from Vitis vinifera (Grape).